Here is a 551-residue protein sequence, read N- to C-terminus: MASEQLSRRENITTERKIQNAEDSVPQRTTHFELRETHELGPNFQSLPRNENQAYLDRGARAPLSANVSESYLDRARVPLNANIPEHRVREKEDFGGVRDMGKFQMESKGGNKSLAEDRETLDTRSRMVTGTPHIKEASGKGQVVEERERARERAMEEEEKRLTMEEISKYRNQAQQSALEALSAAQEKYERAKQATNETLRNTTQAAQEKGEAAQAKDATFEKTQQGYEMTGDTVSNSARTASEKAAQAKNTTLGKTQQGYEATRDTVSNAARTAAEYATPAAEKARCVAVQAKDVTLETGKTAAEKAKCAAEIAAKVAVDLKEKATVAGWTASHYATQLTVDGTRAAANAVEGAVGYVAPKASELAAKSVETVKGLAASAGETAKEFTARKKEESWREYEAKRASQLQEGEEILPSTGGIGKVLPSGERTQAQGTNLQEKVQGKGSDILGAVTETVSDIGSSMIKPIDNANTKVKEHGGTTITPKGQDAGGVLDAIGETIAEIAHTTKVIVVGEDDEVEKSMQKNIGSDSHSLDRAKHEGYRAPKNNVS.

Basic and acidic residues predominate over residues 1–20; sequence MASEQLSRRENITTERKIQN. The tract at residues 1-29 is disordered; it reads MASEQLSRRENITTERKIQNAEDSVPQRT. Position 103 is an N6-biotinyllysine; atypical (Lys-103). The stretch at 141–211 forms a coiled coil; sequence KGQVVEERER…RNTTQAAQEK (71 aa). Disordered stretches follow at residues 197-265 and 518-551; these read TNET…YEAT and DEVE…NNVS. Residues 206 to 219 show a composition bias toward low complexity; that stretch reads QAAQEKGEAAQAKD. Composition is skewed to polar residues over residues 223-242 and 250-265; these read EKTQ…SART and AKNT…YEAT. A compositionally biased stretch (basic and acidic residues) spans 533 to 544; sequence HSLDRAKHEGYR.

This sequence belongs to the seed biotin-containing protein SBP65 family. In terms of tissue distribution, expressed in dry mature seeds.

Its function is as follows. May serve as a biotin source for several growth-limiting enzymes that are necessary during seed development and the subsequent germination stages, and thus may play some roles in determining seed germination capacity. The chain is Seed biotin-containing protein SBP65 (SBP65) from Pisum sativum (Garden pea).